A 593-amino-acid polypeptide reads, in one-letter code: Proteasome-associated ATPase (593 aa).

Residues 23 to 95 (LLSQISYLEE…LKEEVDRLGQ (73 aa)) adopt a coiled-coil conformation. Residue 282–287 (GCGKTL) coordinates ATP. Positions 592–593 (YL) are docks into pockets in the proteasome alpha-ring.

It belongs to the AAA ATPase family. In terms of assembly, homohexamer. Assembles into a hexameric ring structure that caps the 20S proteasome core. Strongly interacts with the prokaryotic ubiquitin-like protein Pup through a hydrophobic interface; the interacting region of ARC lies in its N-terminal coiled-coil domain. There is one Pup binding site per ARC hexamer ring. Upon ATP-binding, the C-terminus of ARC interacts with the alpha-rings of the proteasome core, possibly by binding to the intersubunit pockets.

Its pathway is protein degradation; proteasomal Pup-dependent pathway. In terms of biological role, ATPase which is responsible for recognizing, binding, unfolding and translocation of pupylated proteins into the bacterial 20S proteasome core particle. May be essential for opening the gate of the 20S proteasome via an interaction with its C-terminus, thereby allowing substrate entry and access to the site of proteolysis. Thus, the C-termini of the proteasomal ATPase may function like a 'key in a lock' to induce gate opening and therefore regulate proteolysis. The protein is Proteasome-associated ATPase of Geodermatophilus obscurus (strain ATCC 25078 / DSM 43160 / JCM 3152 / CCUG 61914 / KCC A-0152 / KCTC 9177 / NBRC 13315 / NRRL B-3577 / G-20).